The sequence spans 270 residues: (+)-cis,cis-nepetalactol synthase NEPS3 (270 aa).

NAD(+)-binding positions include 21–27 (GGASGIG), 46–48 (DIQ), 70–71 (DV), Asn-97, 165–169 (YVMSK), and 198–202 (VATPL).

This sequence belongs to the short-chain dehydrogenases/reductases (SDR) family. In terms of assembly, forms homotetramers.

The catalysed reaction is (S)-8-oxocitronellyl enol = cis-cis-nepetalactol. In terms of biological role, functions as a non-oxidoreductive cyclase to promote the formation of cis-cis-nepetalactol. Cis-cis-nepetalactol is then oxidized by NEPS1 into cis-cis-nepetalactone, which belongs to a family of metabolites that are both insect-repellent and have euphoric effect in cats. Binds NAD(+) as classical short-chain dehydrogenase/reductase (SDR), but does not utilize it for its redox-neutral cyclase activity. The chain is (+)-cis,cis-nepetalactol synthase NEPS3 from Nepeta racemosa (Catmint).